A 1251-amino-acid polypeptide reads, in one-letter code: Myosin-1 (1251 aa).

The interval 1-37 is disordered; it reads MGQSKRPFKNKEEKKSRGFGRSRHDDAGAGGRPQVKK. Over residues 9-27 the composition is skewed to basic and acidic residues; sequence KNKEEKKSRGFGRSRHDDA. One can recognise a Myosin motor domain in the interval 48 to 727; sequence IGVSDLTLLS…TLFALEHMRD (680 aa). 141 to 148 is a binding site for ATP; sequence GESGAGKT. Residue S369 is modified to Phosphoserine. The tract at residues 416-498 is actin-binding; sequence TIGILDIYGF…PGVFAALNDA (83 aa). 2 consecutive IQ domains span residues 731-751 and 752-777; these read HNMA…RTEC and AIRI…QGHK. The 196-residue stretch at 785-980 folds into the TH1 domain; that stretch reads RRRYSLVGSR…PGEPANSVSK (196 aa). Disordered regions lie at residues 958–1093 and 1135–1227; these read RDDV…SNEL and AKTP…ASIA. The segment covering 1040–1052 has biased composition (low complexity); the sequence is VAQSVTAVAAAHA. A compositionally biased stretch (pro residues) spans 1061–1073; it reads RPPPPPPPTQPPA. The SH3 domain maps to 1074 to 1135; it reads PKKDTAKALY…PEAYLEPIVA (62 aa). Pro residues predominate over residues 1139-1148; sequence SLPPPPPSLP. Composition is skewed to polar residues over residues 1150 to 1161 and 1216 to 1225; these read QSKSAVSNTLPN and ATPSSLSNAS.

The protein belongs to the TRAFAC class myosin-kinesin ATPase superfamily. Myosin family. Phosphorylation of the TEDS site (Ser-369) is required for the polarization of the actin cytoskeleton. Phosphorylation probably activates the myosin-I ATPase activity.

It localises to the cytoplasm. Its subcellular location is the cytoskeleton. It is found in the actin patch. Type-I myosin implicated in the organization of the actin cytoskeleton. Required for proper actin cytoskeleton polarization. At the cell cortex, assembles in patch-like structures together with proteins from the actin-polymerizing machinery and promotes actin assembly. Functions as actin nucleation-promoting factor (NPF) for the Arp2/3 complex. This is Myosin-1 (MYO1) from Coccidioides immitis (strain RS) (Valley fever fungus).